We begin with the raw amino-acid sequence, 396 residues long: Ribosomal RNA large subunit methyltransferase I (396 aa).

The 80-residue stretch at Ser2–Arg81 folds into the PUA domain.

It belongs to the methyltransferase superfamily. RlmI family.

The protein localises to the cytoplasm. The enzyme catalyses cytidine(1962) in 23S rRNA + S-adenosyl-L-methionine = 5-methylcytidine(1962) in 23S rRNA + S-adenosyl-L-homocysteine + H(+). In terms of biological role, specifically methylates the cytosine at position 1962 (m5C1962) of 23S rRNA. This chain is Ribosomal RNA large subunit methyltransferase I, found in Escherichia coli (strain SMS-3-5 / SECEC).